The following is a 174-amino-acid chain: Dehydratase AgnL8 (174 aa).

Substrate-binding residues include Tyr-24, Tyr-44, and Phe-47. Catalysis depends on residues His-79 and His-104.

It belongs to the scytalone dehydratase family. As to quaternary structure, homotrimer. Each subunit contains an active site, located in the central part of the hydrophobic core of the monomer, which functions independently.

It functions in the pathway secondary metabolite biosynthesis. In terms of biological role, dehydratase; part of the gene cluster that mediates the biosynthesis of agnestins, dihydroxy-xanthone metabolites. The pathway begins with the assembly and cyclization of atrochrysone thioester by the non-reducing polyketide synthase Agnpks1. The atrochrysone carboxyl ACP thioesterase AgnL7 then breaks the thioester bond and releases the atrochrysone carboxylic acid as the first enzyme-free intermediate. The decarboxylase AgnL1 then catalyzes the concerted decarboxylation-elimination required to convert atochrysone carboxylic acid into emodin anthrone, which is further oxidized to emodin by the anthrone oxygenase AgnL2. Emodin then undergoes reduction catalyzed by the oxidoreductase AgnL4 to yield the dihydroquinone tautomer which is the substrate for reduction by the short chain dehydrogenase AgnL6 reduction to produce hydroxyketone, followed by AgnL8 dehydration and likely spontaneous autoxidation to chrysophanol. Baeyer-Villiger oxidation by the oxidase AgnL3 leads to monodictyphenone via cleavage of the C-10/C-10a bond of chrysophanol. Alternative cleavage at the C-4a/C-10 bond of chrysophanol also leads to the formation some cephalone F. Further conversion to agnestins A and B, requires reduction to dihydro-monodictyphenone, oxidation to agnestin C probably via an epoxide, and rearrangement to either agnestin A or agnestin B directly, although agnestin A or agnestin B can also interconvert. Within the cluster, AgnR1 is the only unassigned oxidoreductase present which could be involved in this conversion. However, AgnR1 seems not to be involved in this step, and thus genes involved in the proposed oxidation/reduction may be located elsewhere on the genome. Further agnestin A derivatives are probably formed by spontaneous decarboxylations, dehydrations and methanolysis reactions. The polypeptide is Dehydratase AgnL8 (Paecilomyces divaricatus (Penicillium divaricatum)).